Here is a 1830-residue protein sequence, read N- to C-terminus: Dedicator of cytokinesis protein 2 (1830 aa).

Residues 8–69 (DKERHGVAIY…PKSFIHIKEV (62 aa)) form the SH3 domain. Lys-304 carries the N6-acetyllysine modification. A C2 DOCK-type domain is found at 423–607 (RNDIYITLLQ…DVFSISTLVC (185 aa)). 2 positions are modified to phosphoserine: Ser-588 and Ser-593. At Lys-738 the chain carries N6-acetyllysine. An interaction with CRKL region spans residues 939–1476 (CMTAILNQMG…TSFVTAYKLP (538 aa)). The region spanning 1211–1622 (YKDNNREEMY…VEKEYGVREM (412 aa)) is the DOCKER domain. A compositionally biased stretch (polar residues) spans 1651-1665 (MNSDCSTPSKPTSES). The segment at 1651–1704 (MNSDCSTPSKPTSESFDLELASPKTPRVEQEEPISPGSTLPEVKLRRSKKRTKR) is disordered. Ser-1685, Ser-1706, Ser-1731, and Ser-1784 each carry phosphoserine.

This sequence belongs to the DOCK family. Homodimer. Interacts with RAC1 and RAC2. Interacts with CRKL and VAV. Interacts with CD3Z. Specifically expressed in hematopoietic cells. Highly expressed in peripheral blood leukocytes, and expressed at intermediate level in thymus and spleen. Expressed at very low level in the small intestine and colon.

The protein resides in the endomembrane system. The protein localises to the cytoplasm. It localises to the cytoskeleton. Its function is as follows. Involved in cytoskeletal rearrangements required for lymphocyte migration in response of chemokines. Activates RAC1 and RAC2, but not CDC42, by functioning as a guanine nucleotide exchange factor (GEF), which exchanges bound GDP for free GTP. May also participate in IL2 transcriptional activation via the activation of RAC2. The chain is Dedicator of cytokinesis protein 2 (DOCK2) from Homo sapiens (Human).